The chain runs to 274 residues: Tryptase beta-2 (274 aa).

Positions 1–19 are cleaved as a signal peptide; the sequence is MLKLLLLLALSPLASLVHA. Residues 20 to 29 constitute a propeptide, activation peptide; it reads APCPVKQRVG. The region spanning 30-271 is the Peptidase S1 domain; sequence IVGGREASES…YLDWIHRYVP (242 aa). A disulfide bridge connects residues Cys58 and Cys74. His73 acts as the Charge relay system in catalysis. Position 96 is a phosphotyrosine (Tyr96). Asn104 carries an N-linked (GlcNAc...) asparagine glycan. Asp120 functions as the Charge relay system in the catalytic mechanism. Asn131 is a glycosylation site (N-linked (GlcNAc...) asparagine). 3 disulfide bridges follow: Cys154/Cys229, Cys187/Cys210, and Cys219/Cys247. The active-site Charge relay system is Ser223.

Belongs to the peptidase S1 family. Tryptase subfamily. Homotetramer. The active tetramer is converted to inactive monomers at neutral and acidic pH in the absence of heparin. Low concentrations of inactive monomers become active monomers at pH 6.0 in the presence of heparin. When the concentration of active monomers is higher, they convert to active monomers and then to active tetramers. These monomers are active and functionally distinct from the tetrameric enzyme. In contrast to the hidden active sites in the tetrameric form, the active site of the monomeric form is accessible for macromolecular proteins and inhibitors, e.g. fibrinogen which is a substrate for the monomeric but not for the tetrameric form. The monomeric form forms a complex with SERPINB6.

It localises to the secreted. It catalyses the reaction Preferential cleavage: Arg-|-Xaa, Lys-|-Xaa, but with more restricted specificity than trypsin.. Tryptase is the major neutral protease present in mast cells and is secreted upon the coupled activation-degranulation response of this cell type. Plays a role in innate immunity. This Rattus norvegicus (Rat) protein is Tryptase beta-2 (Tpsb2).